The chain runs to 224 residues: Imidazoleglycerol-phosphate dehydratase (224 aa).

It belongs to the imidazoleglycerol-phosphate dehydratase family.

It carries out the reaction D-erythro-1-(imidazol-4-yl)glycerol 3-phosphate = 3-(imidazol-4-yl)-2-oxopropyl phosphate + H2O. It participates in amino-acid biosynthesis; L-histidine biosynthesis; L-histidine from 5-phospho-alpha-D-ribose 1-diphosphate: step 6/9. The protein is Imidazoleglycerol-phosphate dehydratase (HIS3) of Cyberlindnera jadinii (Torula yeast).